Consider the following 1064-residue polypeptide: Bifunctional cytochrome P450/NADPH--P450 reductase ascE (1064 aa).

Positions Met1–Lys484 are cytochrome P450. Residue Cys411 coordinates heme. Residues Ile485–Ala1064 are NADPH-P-450 reductase. Residues Met504 to Leu644 enclose the Flavodoxin-like domain. Residues Ser510–Thr514 and Val588–Ala620 contribute to the FMN site. Residues Val676–Pro905 enclose the FAD-binding FR-type domain.

It in the N-terminal section; belongs to the cytochrome P450 family. FAD serves as cofactor. Requires FMN as cofactor. The cofactor is heme.

It catalyses the reaction ilicicolin A + NADPH + O2 + H(+) = ilicicolin A epoxide + NADP(+) + H2O. It functions in the pathway secondary metabolite biosynthesis; terpenoid biosynthesis. In terms of biological role, bifunctional cytochrome P450/NADPH--P450 reductase; part of the asc-1 gene cluster that mediates the biosynthesis both ascochlorin and ascofuranone, a strong inhibitor of cyanide-insensitive alternative oxidases and a promising drug candidate against African trypanosomiasis. The first step in the pathway is performed by the non-reducing polyketide synthase ascC that produces orsellinic acid by condensing acetyl-CoA with 3 malonyl-CoA units. Orsellinic acid is then prenylated by the prenyltransferase ascA to yield ilicicolinic acid B. Ilicicolinic acid B is further reduced to ilicicolin B by the reductase ascB. The halogenase ascD then chlorinates ilicicolin B to produce ilicicolin A which is converted to ilicicolin A epoxide by the cytochrome P450 monooxygenase ascE that catalyzes stereoselective epoxidation of the terminal double bond of the prenyl group. Ilicicolin A epoxide is the last common precursor for the biosynthesis of ascofuranone and ascochlorin. The terpene cyclase ascF produces a monocyclic terpene, and the cyclization reaction is proposed to be initiated by protonation of the terminal epoxide of ilicicolin A epoxide to generate a monocyclic tertiarycation, which is followed by a series of hydride and methyl shifts with abstraction of proton, leading to the formation of the (14S,15R,19R)-trimethylcyclohexanone ring structure of ilicicolin C, which is finally reduced to ascochlorin by the dehydrogenase ascG. On the other hand, ilicicolin A epoxide is hydroxylated by the cytochrome P450 monooxygenase ascH, and the resultant product is cyclized by the terpene cyclase ascI to ascofuranol via protonation-initiated epoxide ring opening, which facilitates the 6-endo-tet cyclization to form the tetrahy-drofuran ring. Finally, ascofuranol is oxidized into ascofuranone by ascJ. In Acremonium egyptiacum (Oospora egyptiaca), this protein is Bifunctional cytochrome P450/NADPH--P450 reductase ascE.